The following is a 225-amino-acid chain: Endonuclease V (225 aa).

Asp43 and Asp110 together coordinate Mg(2+).

This sequence belongs to the endonuclease V family. Requires Mg(2+) as cofactor.

The protein localises to the cytoplasm. It catalyses the reaction Endonucleolytic cleavage at apurinic or apyrimidinic sites to products with a 5'-phosphate.. DNA repair enzyme involved in the repair of deaminated bases. Selectively cleaves double-stranded DNA at the second phosphodiester bond 3' to a deoxyinosine leaving behind the intact lesion on the nicked DNA. The protein is Endonuclease V of Thermotoga sp. (strain RQ2).